Here is a 137-residue protein sequence, read N- to C-terminus: Large ribosomal subunit protein uL16 (137 aa).

It belongs to the universal ribosomal protein uL16 family. In terms of assembly, part of the 50S ribosomal subunit.

In terms of biological role, binds 23S rRNA and is also seen to make contacts with the A and possibly P site tRNAs. The sequence is that of Large ribosomal subunit protein uL16 from Psychrobacter cryohalolentis (strain ATCC BAA-1226 / DSM 17306 / VKM B-2378 / K5).